The following is a 388-amino-acid chain: DNA replication and repair protein RecF (388 aa).

Position 30-37 (glycine 30–serine 37) interacts with ATP.

This sequence belongs to the RecF family.

The protein localises to the cytoplasm. Its function is as follows. The RecF protein is involved in DNA metabolism; it is required for DNA replication and normal SOS inducibility. RecF binds preferentially to single-stranded, linear DNA. It also seems to bind ATP. This is DNA replication and repair protein RecF from Picosynechococcus sp. (strain ATCC 27264 / PCC 7002 / PR-6) (Agmenellum quadruplicatum).